A 163-amino-acid chain; its full sequence is Cyclic pyranopterin monophosphate synthase (163 aa).

Substrate is bound by residues 75 to 77 and 113 to 114; these read LCH and ME. D128 is a catalytic residue.

Belongs to the MoaC family. As to quaternary structure, homohexamer; trimer of dimers.

It carries out the reaction (8S)-3',8-cyclo-7,8-dihydroguanosine 5'-triphosphate = cyclic pyranopterin phosphate + diphosphate. Its pathway is cofactor biosynthesis; molybdopterin biosynthesis. In terms of biological role, catalyzes the conversion of (8S)-3',8-cyclo-7,8-dihydroguanosine 5'-triphosphate to cyclic pyranopterin monophosphate (cPMP). This Jannaschia sp. (strain CCS1) protein is Cyclic pyranopterin monophosphate synthase.